The sequence spans 475 residues: MVMMLVMLSLHGTAARLNRREWDSVIQLPTEPVDDEVGTRWAVLVAGSNGYGNYRHQADVCHAYQLLIKGGVKEENIVVFMYDDIAYNAMNPRPGVIINHPQGPDVYAGVPKDYTGEDVTPENLYAVILGDKSKVKGGSGKVINSNPEDRIFIFYSDHGGPGVLGMPNAPFVYAMDFIDVLKKKHASGGYKEMVIYIEACESGSIFEGIMPKDLNIYVTTASNAQENSFGTYCPGMNPPPPEEYVTCLGDLYSVSWMEDSETHNLKRETVQQQYQSVRKRTSNSNSYRFGSHVMQYGDTNITAEKLYLYHGFDPATVNFPPHNGNLEAKMEVVNQRDAELLFMWQMYQRSNHQPEKKTHILEQITETVKHRNHLDGSVELIGVLLYGPGKSSSVLHSVRAPGLPLVDDWTCLKSMVRVFETHCGSLTQYGMKHMRAFGNVCNSGVSKASMEEACKAACGGYDAGLLYPSNTGYSA.

Residues 1–15 form the signal peptide; sequence MVMMLVMLSLHGTAA. Positions 16 to 35 are excised as a propeptide; the sequence is RLNRREWDSVIQLPTEPVDD. Histidine 158 is a catalytic residue. Residue cysteine 200 is the Nucleophile of the active site. Cysteine 233 and cysteine 247 are oxidised to a cystine. Asparagine 300 carries an N-linked (GlcNAc...) asparagine glycan. Cystine bridges form between cysteine 411–cysteine 441 and cysteine 423–cysteine 458.

This sequence belongs to the peptidase C13 family. As to quaternary structure, homodimer.

The enzyme catalyses Hydrolysis of proteins and small molecule substrates at -Asn-|-Xaa- bonds.. Its activity is regulated as follows. Repressed by various protease inhibitors including p-chloromercuribenzene sulfonic acid (PCMBS), N-ethylmaleimide, kininogen, elastatinal, cystatin EW and leupeptin. Its function is as follows. Asparaginyl endopeptidase able to cleave almost all peptide bonds on the carboxyl side of Asn residues, except at the NH2 terminus or second position or with N-glycosylated Asn. Responsible for the maturation (circular permutation) of concanavalin A from its precursor, by performing both cleavage and cleavage-coupled transpeptidation to form conA. The polypeptide is Legumain (Canavalia ensiformis (Jack bean)).